The sequence spans 131 residues: Small ribosomal subunit protein bS6 (131 aa).

Residues 98 to 131 (EASPMVKAKDERRERREDFANETSEETEAGDSEE) are disordered. The span at 104–116 (KAKDERRERREDF) shows a compositional bias: basic and acidic residues. Over residues 120–131 (TSEETEAGDSEE) the composition is skewed to acidic residues.

Belongs to the bacterial ribosomal protein bS6 family.

Its function is as follows. Binds together with bS18 to 16S ribosomal RNA. The polypeptide is Small ribosomal subunit protein bS6 (Edwardsiella ictaluri (strain 93-146)).